A 54-amino-acid chain; its full sequence is MIVKLMGSNKDLHRQAKNNNNKLTPNRSLKETRSRLYIIRRCLVMLLCWREPRD.

The segment at 20 to 51 is required for DVL/RTFL small polypeptide activity; it reads NNKLTPNRSLKETRSRLYIIRRCLVMLLCWRE. Asn26 is a glycosylation site (N-linked (GlcNAc...) asparagine). Residues 31 to 48 form a helical membrane-spanning segment; the sequence is ETRSRLYIIRRCLVMLLC.

It belongs to the DVL/RTFL small polypeptides family.

It localises to the cell membrane. Its function is as follows. Small polypeptide acting as a regulatory molecule which coordinates cellular responses required for differentiation, growth and development, probably by restricting polar cell proliferation in lateral organs and coordinating socket cell recruitment and differentiation at trichome sites. The polypeptide is Small polypeptide DEVIL 12 (Arabidopsis thaliana (Mouse-ear cress)).